The chain runs to 312 residues: tRNA-dihydrouridine(16) synthase (312 aa).

FMN-binding positions include 7 to 9 and Gln68; that span reads PME. The active-site Proton donor is the Cys98. Residues Lys139, 200 to 202, and 224 to 225 each bind FMN; these read NGE and GR.

This sequence belongs to the Dus family. DusC subfamily. The cofactor is FMN.

It carries out the reaction 5,6-dihydrouridine(16) in tRNA + NADP(+) = uridine(16) in tRNA + NADPH + H(+). The enzyme catalyses 5,6-dihydrouridine(16) in tRNA + NAD(+) = uridine(16) in tRNA + NADH + H(+). Catalyzes the synthesis of 5,6-dihydrouridine (D), a modified base found in the D-loop of most tRNAs, via the reduction of the C5-C6 double bond in target uridines. Specifically modifies U16 in tRNAs. This Yersinia pestis protein is tRNA-dihydrouridine(16) synthase.